The chain runs to 448 residues: N-succinylarginine dihydrolase (448 aa).

Substrate contacts are provided by residues 19–28, Asn-110, and 137–138; these read GGLSYGNVAS and HR. The active site involves Glu-174. Arg-214 provides a ligand contact to substrate. His-250 is a catalytic residue. Asp-252 and Asn-365 together coordinate substrate. Cys-371 serves as the catalytic Nucleophile.

This sequence belongs to the succinylarginine dihydrolase family. In terms of assembly, homodimer.

The catalysed reaction is N(2)-succinyl-L-arginine + 2 H2O + 2 H(+) = N(2)-succinyl-L-ornithine + 2 NH4(+) + CO2. It functions in the pathway amino-acid degradation; L-arginine degradation via AST pathway; L-glutamate and succinate from L-arginine: step 2/5. Its function is as follows. Catalyzes the hydrolysis of N(2)-succinylarginine into N(2)-succinylornithine, ammonia and CO(2). The polypeptide is N-succinylarginine dihydrolase (Pseudomonas fluorescens (strain Pf0-1)).